A 488-amino-acid polypeptide reads, in one-letter code: Regulatory protein ViaA (488 aa).

The protein belongs to the ViaA family. As to quaternary structure, homodimer. Interacts with RavA.

The protein localises to the cytoplasm. Its function is as follows. Component of the RavA-ViaA chaperone complex, which may act on the membrane to optimize the function of some of the respiratory chains. ViaA stimulates the ATPase activity of RavA. The chain is Regulatory protein ViaA from Yersinia pseudotuberculosis serotype O:1b (strain IP 31758).